Consider the following 448-residue polypeptide: Carbon catabolite repressor protein 4 homolog 3 (448 aa).

Positions Ser50–Ser67 are enriched in low complexity. The tract at residues Ser50–Arg92 is disordered. Residue Glu162 coordinates Mg(2+).

Belongs to the CCR4/nocturin family. In terms of assembly, component of the CCR4-NOT complex, at least composed of CRR4 and CAF1 proteins. Mg(2+) is required as a cofactor.

It is found in the nucleus. It localises to the cytoplasm. It carries out the reaction Exonucleolytic cleavage of poly(A) to 5'-AMP.. Acts as a catalytic component of the CCR4-NOT core complex, which in the nucleus seems to be a general transcription factor, and in the cytoplasm the major mRNA deadenylase involved in mRNA turnover. This Arabidopsis thaliana (Mouse-ear cress) protein is Carbon catabolite repressor protein 4 homolog 3 (CCR4-3).